The following is a 243-amino-acid chain: Uridylate kinase (243 aa).

Residue 12–15 participates in ATP binding; sequence KLSG. The tract at residues 20 to 25 is involved in allosteric activation by GTP; that stretch reads GPGGSG. Residue G56 participates in UMP binding. Residues G57 and R61 each coordinate ATP. UMP is bound by residues D76 and 137-144; that span reads TGSPYFST. N165, Y171, and D174 together coordinate ATP.

This sequence belongs to the UMP kinase family. Homohexamer.

It localises to the cytoplasm. It catalyses the reaction UMP + ATP = UDP + ADP. Its pathway is pyrimidine metabolism; CTP biosynthesis via de novo pathway; UDP from UMP (UMPK route): step 1/1. Allosterically activated by GTP. Inhibited by UTP. In terms of biological role, catalyzes the reversible phosphorylation of UMP to UDP. The chain is Uridylate kinase from Oenococcus oeni (strain ATCC BAA-331 / PSU-1).